We begin with the raw amino-acid sequence, 86 residues long: U2-sicaritoxin-Li1a (86 aa).

The signal sequence occupies residues 1 to 20 (MTFKLFVVVTLVLAIYVATA). A propeptide spanning residues 21–33 (EEAMKDDSEPAER) is cleaved from the precursor. Cystine bridges form between cysteine 35–cysteine 53, cysteine 42–cysteine 62, cysteine 52–cysteine 71, and cysteine 64–cysteine 69.

Belongs to the neurotoxin 39 family. As to expression, expressed by the venom gland.

The protein localises to the secreted. Its function is as follows. Toxin active against S.frugiperda larvae. May act on sodium channels (Nav). In Loxosceles intermedia (Brown spider), this protein is U2-sicaritoxin-Li1a.